A 101-amino-acid polypeptide reads, in one-letter code: NADH-quinone oxidoreductase subunit K (101 aa).

3 consecutive transmembrane segments (helical) span residues 4–24, 30–50, and 61–81; these read LSHYLVLGAILFAISVVGIFL, IVLLMAIELMLLAVNLNFIAF, and IFVFFILTVAAAESAIGLAIL.

Belongs to the complex I subunit 4L family. NDH-1 is composed of 14 different subunits. Subunits NuoA, H, J, K, L, M, N constitute the membrane sector of the complex.

The protein localises to the cell inner membrane. The catalysed reaction is a quinone + NADH + 5 H(+)(in) = a quinol + NAD(+) + 4 H(+)(out). Its function is as follows. NDH-1 shuttles electrons from NADH, via FMN and iron-sulfur (Fe-S) centers, to quinones in the respiratory chain. The immediate electron acceptor for the enzyme in this species is believed to be ubiquinone. Couples the redox reaction to proton translocation (for every two electrons transferred, four hydrogen ions are translocated across the cytoplasmic membrane), and thus conserves the redox energy in a proton gradient. This is NADH-quinone oxidoreductase subunit K from Aromatoleum aromaticum (strain DSM 19018 / LMG 30748 / EbN1) (Azoarcus sp. (strain EbN1)).